The sequence spans 191 residues: Potassium-transporting ATPase KdpC subunit (191 aa).

Residues 6-26 form a helical membrane-spanning segment; it reads PALVLFILLTLLTGGVYPLLT.

It belongs to the KdpC family. In terms of assembly, the system is composed of three essential subunits: KdpA, KdpB and KdpC.

It is found in the cell inner membrane. Its function is as follows. Part of the high-affinity ATP-driven potassium transport (or Kdp) system, which catalyzes the hydrolysis of ATP coupled with the electrogenic transport of potassium into the cytoplasm. This subunit acts as a catalytic chaperone that increases the ATP-binding affinity of the ATP-hydrolyzing subunit KdpB by the formation of a transient KdpB/KdpC/ATP ternary complex. This Klebsiella pneumoniae subsp. pneumoniae (strain ATCC 700721 / MGH 78578) protein is Potassium-transporting ATPase KdpC subunit.